Here is a 210-residue protein sequence, read N- to C-terminus: Large ribosomal subunit protein uL4 (210 aa).

The span at 41 to 52 shows a compositional bias: polar residues; that stretch reads QTNARQGTASTK. The tract at residues 41-71 is disordered; sequence QTNARQGTASTKTRAEVRGGGRKPWRQKGTG. Positions 60–71 are enriched in basic residues; it reads GGRKPWRQKGTG.

The protein belongs to the universal ribosomal protein uL4 family. Part of the 50S ribosomal subunit.

Its function is as follows. One of the primary rRNA binding proteins, this protein initially binds near the 5'-end of the 23S rRNA. It is important during the early stages of 50S assembly. It makes multiple contacts with different domains of the 23S rRNA in the assembled 50S subunit and ribosome. Forms part of the polypeptide exit tunnel. The polypeptide is Large ribosomal subunit protein uL4 (Trichormus variabilis (strain ATCC 29413 / PCC 7937) (Anabaena variabilis)).